The sequence spans 316 residues: MSDLNQGPGASTAQPKPIEAKPLRHPGRWVAAAIIVALLAWFIISALNNEAYGWDTYRSYLFDTRIATAALHTIALTLLSMILGVVLGAILAVMRMSGNPVMQGVAWLYLWIFRGTPIYVQLVFWGLLGSLYQSINLGFAEIDLQSLLSNMFLLAVIGLGLNEAAYMAEIVRSGIQAVPEGQMEASKALGMNWSMTMRRTILPQAMRIIIPPTGNELISMLKTTSLVVAIPYSLELYGRSMDIAYSLFEPVPMLLVAASWYLVITSILMVGQYYLEKHFEKGSTRTLTARQLAALADAEGAIPGNVTVVPETSKEN.

Positions 1-14 (MSDLNQGPGASTAQ) are enriched in polar residues. Residues 1 to 20 (MSDLNQGPGASTAQPKPIEA) form a disordered region. The next 6 helical transmembrane spans lie at 29–49 (WVAAAIIVALLAWFIISALNN), 74–94 (IALTLLSMILGVVLGAILAVM), 108–128 (LYLWIFRGTPIYVQLVFWGLL), 151–171 (MFLLAVIGLGLNEAAYMAEIV), 217–237 (LISMLKTTSLVVAIPYSLELY), and 251–271 (VPMLLVAASWYLVITSILMVG). Residues 70-274 (ALHTIALTLL…TSILMVGQYY (205 aa)) enclose the ABC transmembrane type-1 domain.

This sequence belongs to the binding-protein-dependent transport system permease family. The complex is probably composed of two ATP-binding proteins (ArgV), two transmembrane proteins (ArgU) and a solute-binding protein (ArgT).

It localises to the cell membrane. In terms of biological role, part of the ABC transporter complex ArgTUV involved in L-arginine import. May also transport L-citrulline. Probably responsible for the translocation of the substrate across the membrane. The chain is Arginine transport system permease protein ArgU from Corynebacterium glutamicum (strain ATCC 13032 / DSM 20300 / JCM 1318 / BCRC 11384 / CCUG 27702 / LMG 3730 / NBRC 12168 / NCIMB 10025 / NRRL B-2784 / 534).